A 551-amino-acid chain; its full sequence is Cytochrome c oxidase subunit 1 homolog (551 aa).

A run of 3 helical transmembrane segments spans residues 14-34 (GELG…VVAA), 40-60 (EYAF…FVIG), and 88-108 (VGTL…VIIA). His-132 provides a ligand contact to heme b. The next 8 helical transmembrane spans lie at 133-153 (TSAV…FYVV), 169-189 (FVVL…LLGI), 202-222 (ADLW…GTVL), 229-249 (IYVA…LHLG), 280-300 (GHNA…YYFI), 313-333 (LSIV…PHHL), 345-365 (LGMT…INGL), and 383-403 (MMVV…MMSV). Cu cation-binding residues include His-281, His-331, and His-332. Residues His-419 and His-421 each coordinate heme b. 3 consecutive transmembrane segments (helical) span residues 424–444 (ALGW…PWLW), 459–479 (FWVS…AGIL), and 513–533 (IGGI…FMTI).

This sequence belongs to the heme-copper respiratory oxidase family. Cu(2+) serves as cofactor. The cofactor is heme b.

Its subcellular location is the cell membrane. The catalysed reaction is 4 Fe(II)-[cytochrome c] + O2 + 8 H(+)(in) = 4 Fe(III)-[cytochrome c] + 2 H2O + 4 H(+)(out). It participates in energy metabolism; oxidative phosphorylation. Its function is as follows. Cytochrome c oxidase is the component of the respiratory chain that catalyzes the reduction of oxygen to water. Subunits 1-3 form the functional core of the enzyme complex. Co I is the catalytic subunit of the enzyme. Electrons originating in cytochrome c or a quinol are transferred to the bimetallic center formed by a high-spin heme and copper B. The chain is Cytochrome c oxidase subunit 1 homolog (fixN) from Azorhizobium caulinodans (strain ATCC 43989 / DSM 5975 / JCM 20966 / LMG 6465 / NBRC 14845 / NCIMB 13405 / ORS 571).